The primary structure comprises 207 residues: Ras-related protein Rab-7a (207 aa).

At Thr-2 the chain carries N-acetylthreonine. Ser-17, Gly-18, Val-19, Gly-20, Lys-21, Thr-22, Ser-23, Ser-34, Asn-35, Tyr-37, and Thr-40 together coordinate GTP. Thr-22 contacts Mg(2+). Positions Tyr-28–Ile-41 match the Switch 1 motif. Thr-40 and Asp-63 together coordinate Mg(2+). Gly-66 lines the GTP pocket. The Switch 2 signature appears at Gln-67–Asp-82. Phosphoserine is present on Ser-72. Residues Asn-125, Lys-126, Asp-128, Ala-156, and Lys-157 each coordinate GTP. Residues Lys-191 and Lys-194 each participate in a glycyl lysine isopeptide (Lys-Gly) (interchain with G-Cter in ubiquitin) cross-link. 2 S-geranylgeranyl cysteine lipidation sites follow: Cys-205 and Cys-207. A Cysteine methyl ester modification is found at Cys-207.

The protein belongs to the small GTPase superfamily. Rab family. As to quaternary structure, interacts with NTRK1/TRKA. Interacts with RILP. Interacts with PSMA7. Interacts with RNF115. Interacts with and FYCO1. Interacts with the PIK3C3/VPS34-PIK3R4 complex. The GTP-bound form interacts with OSBPL1A. The GTP-bound form interacts with RAC1. Interacts with CLN3. Interacts with CHM, the substrate-binding subunit of the Rab geranylgeranyltransferase complex. Interacts with C9orf72. Does not interact with HPS4 and the BLOC-3 complex (heterodimer of HPS1 and HPS4). Interacts with CLN5. Interacts with PLEKHM1 (via N- and C-terminus). Interacts with PRPH; the interaction is direct. Interacts with VPS13A. The GDP-bound form interacts with RIMOC1. Interacts with the MON1A-CCZ1B complex and this interaction is enhanced in the presence of RIMOC1. Interacts with VPS39 and VPS41. Forms a ternary complex with LAMP2 and RUFY4; the interaction with LAMP2 is mediated by RUFY4 (via RUN and coiled coil domains). Mg(2+) is required as a cofactor. In terms of processing, deubiquitination at Lys-191 and Lys-194 by USP32. Post-translationally, phosphorylated at Ser-72 by LRRK1; phosphorylation is dependent on protein kinase C (PKC) activation of LRRK1. Prenylated. Prenylation is required for association with cellular membranes. In terms of tissue distribution, expressed in osteoclasts and in neurons.

It localises to the cytoplasmic vesicle. It is found in the phagosome membrane. The protein localises to the late endosome membrane. Its subcellular location is the lysosome membrane. The protein resides in the melanosome membrane. It localises to the autophagosome membrane. It is found in the lipid droplet. The protein localises to the endosome membrane. Its subcellular location is the mitochondrion membrane. It catalyses the reaction GTP + H2O = GDP + phosphate + H(+). Its activity is regulated as follows. Regulated by guanine nucleotide exchange factors (GEFs) which promote the exchange of bound GDP for free GTP. Regulated by GTPase activating proteins (GAPs) which increase the GTP hydrolysis activity. Inhibited by GDP dissociation inhibitors (GDIs). Its function is as follows. The small GTPases Rab are key regulators of intracellular membrane trafficking, from the formation of transport vesicles to their fusion with membranes. Rabs cycle between an inactive GDP-bound form and an active GTP-bound form that is able to recruit to membranes different sets of downstream effectors directly responsible for vesicle formation, movement, tethering and fusion. In its active state, RAB7A binds to a variety of effector proteins playing a key role in the regulation of endo-lysosomal trafficking. Governs early-to-late endosomal maturation, microtubule minus-end as well as plus-end directed endosomal migration and positioning, and endosome-lysosome transport through different protein-protein interaction cascades. Also plays a central role in growth-factor-mediated cell signaling, nutrient-transporter-mediated nutrient uptake, neurotrophin transport in the axons of neurons and lipid metabolism. Also involved in regulation of some specialized endosomal membrane trafficking, such as maturation of melanosomes, pathogen-induced phagosomes (or vacuoles) and autophagosomes. Plays a role in the maturation and acidification of phagosomes that engulf pathogens, such as S.aureus and Mycobacteria. Plays a role in the fusion of phagosomes with lysosomes. In concert with RAC1, plays a role in regulating the formation of RBs (ruffled borders) in osteoclasts. Controls the endosomal trafficking and neurite outgrowth signaling of NTRK1/TRKA. Regulates the endocytic trafficking of the EGF-EGFR complex by regulating its lysosomal degradation. Involved in the ADRB2-stimulated lipolysis through lipophagy, a cytosolic lipase-independent autophagic pathway. Required for the exosomal release of SDCBP, CD63 and syndecan. Required for vesicular trafficking and cell surface expression of ACE2. May play a role in PRPH neuronal intermediate filament assembly. The polypeptide is Ras-related protein Rab-7a (Rattus norvegicus (Rat)).